We begin with the raw amino-acid sequence, 695 residues long: Protein-glutamine gamma-glutamyltransferase 2 (695 aa).

Residues C272, H332, and D355 contribute to the active site. 5 residues coordinate Ca(2+): N395, D397, E434, E444, and E449. Residues 476-482 (SIKHAQP) and 578-581 (ANIP) contribute to the GTP site.

The protein belongs to the transglutaminase superfamily. Transglutaminase family. As to quaternary structure, monomer. Ca(2+) is required as a cofactor.

It localises to the cytoplasm. The protein localises to the cytosol. The protein resides in the nucleus. Its subcellular location is the chromosome. It is found in the secreted. It localises to the extracellular space. The protein localises to the extracellular matrix. The protein resides in the cell membrane. Its subcellular location is the mitochondrion. It carries out the reaction L-glutaminyl-[protein] + L-lysyl-[protein] = [protein]-L-lysyl-N(6)-5-L-glutamyl-[protein] + NH4(+). The catalysed reaction is L-glutaminyl-[protein] + serotonin = 5-serotonyl-L-glutamyl-[protein] + NH4(+). The enzyme catalyses L-glutaminyl-[protein] + dopamine = 5-dopaminyl-L-glutamyl-[protein] + NH4(+). It catalyses the reaction L-glutaminyl-[protein] + histamine = 5-histaminyl-L-glutamyl-[protein] + NH4(+). It carries out the reaction L-glutaminyl-[protein] + (R)-noradrenaline = 5-(R)-noradrenalinyl-L-glutamyl-[protein] + NH4(+). The catalysed reaction is L-glutaminyl-[protein] + H2O = L-glutamyl-[protein] + NH4(+). With respect to regulation, acyltransferase activity is regulated by the binding of GTP and Ca(2+): inactivated by GTP, which stabilizes its closed structure, thereby obstructing the accessibility of substrates to the active sites. In contrast, Ca(2+) acts as a cofactor by inducing conformational change to the active open form. In absence of Ca(2+), Mg(2+) may bind Ca(2+)-binding sites, promoting GTP-binding and subsequent inhibition of the acyltransferase activity. Calcium-dependent acyltransferase that catalyzes the formation of covalent bonds between peptide-bound glutamine and various primary amines, such as gamma-amino group of peptide-bound lysine, or mono- and polyamines, thereby producing cross-linked or aminated proteins, respectively. Involved in many biological processes, such as bone development, angiogenesis, wound healing, cellular differentiation, chromatin modification and apoptosis. Acts as a protein-glutamine gamma-glutamyltransferase by mediating the cross-linking of proteins: under physiological conditions, the protein cross-linking activity is inhibited by GTP; inhibition is relieved by Ca(2+) in response to various stresses. When secreted, catalyzes cross-linking of proteins of the extracellular matrix, resulting in the formation of scaffolds. Plays a key role during apoptosis, both by (1) promoting the cross-linking of cytoskeletal proteins resulting in condensation of the cytoplasm, and by (2) mediating cross-linking proteins of the extracellular matrix, resulting in the irreversible formation of scaffolds that stabilize the integrity of the dying cells before their clearance by phagocytosis, thereby preventing the leakage of harmful intracellular components. In addition to protein cross-linking, can use different monoamine substrates to catalyze a vast array of protein post-translational modifications: mediates aminylation of serotonin, dopamine, noradrenaline or histamine into glutamine residues of target proteins to generate protein serotonylation, dopaminylation, noradrenalinylation or histaminylation, respectively. Mediates protein serotonylation of small GTPases during activation and aggregation of platelets, leading to constitutive activation of these GTPases. Plays a key role in chromatin organization by mediating serotonylation and dopaminylation of histone H3. Catalyzes serotonylation of 'Gln-5' of histone H3 (H3Q5ser) during serotonergic neuron differentiation, thereby facilitating transcription. Acts as a mediator of neurotransmission-independent role of nuclear dopamine in ventral tegmental area (VTA) neurons: catalyzes dopaminylation of 'Gln-5' of histone H3 (H3Q5dop), thereby regulating relapse-related transcriptional plasticity in the reward system. Also acts as a protein deamidase by mediating the side chain deamidation of specific glutamine residues of proteins to glutamate. May also act as an isopeptidase cleaving the previously formed cross-links. Also able to participate in signaling pathways independently of its acyltransferase activity: acts as a signal transducer in alpha-1 adrenergic receptor-mediated stimulation of phospholipase C-delta (PLCD) activity and is required for coupling alpha-1 adrenergic agonists to the stimulation of phosphoinositide lipid metabolism. This is Protein-glutamine gamma-glutamyltransferase 2 from Pagrus major (Red sea bream).